The following is a 209-amino-acid chain: Chaperone protein TorD (209 aa).

Belongs to the TorD/DmsD family. TorD subfamily.

The protein localises to the cytoplasm. In terms of biological role, involved in the biogenesis of TorA. Acts on TorA before the insertion of the molybdenum cofactor and, as a result, probably favors a conformation of the apoenzyme that is competent for acquiring the cofactor. This chain is Chaperone protein TorD, found in Shewanella massilia.